A 126-amino-acid chain; its full sequence is Thioredoxin H-type 1 (126 aa).

The Thioredoxin domain occupies 2–120; the sequence is AANDATSSEE…LQQTIVKHAA (119 aa). Catalysis depends on nucleophile residues Cys-46 and Cys-49. A disulfide bridge links Cys-46 with Cys-49.

It belongs to the thioredoxin family. Plant H-type subfamily.

The protein localises to the cytoplasm. Participates in various redox reactions through the reversible oxidation of the active center dithiol to a disulfide. The H form is known to activate a number of cytosolic enzymes. The chain is Thioredoxin H-type 1 from Nicotiana tabacum (Common tobacco).